The primary structure comprises 702 residues: Serotransferrin-A (702 aa).

Positions 1-19 (MDLSLRVALCLSMLALCLA) are cleaved as a signal peptide. 2 consecutive Transferrin-like domains span residues 26–340 (VRWC…ALKE) and 353–685 (VRWC…SLNK). Intrachain disulfides connect Cys29–Cys64 and Cys39–Cys55. Residues Asp79 and Tyr111 each coordinate Fe(3+). 3 cysteine pairs are disulfide-bonded: Cys134–Cys217, Cys179–Cys192, and Cys245–Cys259. Residues Thr136, Lys140, Ala142, and Gly143 each contribute to the hydrogencarbonate site. Tyr211 serves as a coordination point for Fe(3+). Fe(3+) is bound at residue His267. The interval 340 to 349 (EGVKEDDSAA) is connecting region. 2 cysteine pairs are disulfide-bonded: Cys356–Cys388 and Cys366–Cys379. Fe(3+)-binding residues include Asp403 and Tyr442. 7 cysteine pairs are disulfide-bonded: Cys413–Cys697, Cys431–Cys658, Cys465–Cys544, Cys489–Cys686, Cys499–Cys513, Cys510–Cys527, and Cys584–Cys598. Hydrogencarbonate is bound by residues Thr467, Arg471, Ala473, and Gly474. Tyr538 contacts Fe(3+). A Fe(3+)-binding site is contributed by His606.

This sequence belongs to the transferrin family. In terms of assembly, monomer. As to expression, plasma.

The protein localises to the secreted. In terms of biological role, transferrins are iron binding transport proteins which can bind two Fe(3+) ions in association with the binding of an anion, usually bicarbonate. It is responsible for the transport of iron from sites of absorption and heme degradation to those of storage and utilization. Serum transferrin may also have a further role in stimulating cell proliferation. This is Serotransferrin-A (tf-a) from Xenopus laevis (African clawed frog).